Here is a 152-residue protein sequence, read N- to C-terminus: Large ribosomal subunit protein uL13 (152 aa).

Residues 133 to 152 are disordered; the sequence is EHPHQAQKPQPLTINTIPGA. Positions 139–152 are enriched in polar residues; the sequence is QKPQPLTINTIPGA.

Belongs to the universal ribosomal protein uL13 family. In terms of assembly, part of the 50S ribosomal subunit.

Its function is as follows. This protein is one of the early assembly proteins of the 50S ribosomal subunit, although it is not seen to bind rRNA by itself. It is important during the early stages of 50S assembly. This chain is Large ribosomal subunit protein uL13, found in Thermosynechococcus vestitus (strain NIES-2133 / IAM M-273 / BP-1).